The chain runs to 231 residues: UPF0758 protein aq_1610 (231 aa).

The MPN domain occupies 110-231 (SIRNPQEAFE…YFSFREEGVL (122 aa)). Zn(2+)-binding residues include H180, H182, and D193. The JAMM motif motif lies at 180-193 (HNHPQGEPSPSNED).

Belongs to the UPF0758 family.

This is UPF0758 protein aq_1610 from Aquifex aeolicus (strain VF5).